Reading from the N-terminus, the 327-residue chain is Taste receptor type 2 member 102 (327 aa).

The Extracellular portion of the chain corresponds to 1 to 7 (MEPVIYS). Residues 8–28 (FATLLIHVEFIFGNLSNGFIV) traverse the membrane as a helical segment. Residues 29 to 46 (LSNFWDWVIKRKLSTIDK) lie on the Cytoplasmic side of the membrane. A helical membrane pass occupies residues 47–67 (ILLTLAISRITLIWEIYTWFT). Over 68–87 (SVYGPSSFAIGMKLQILYFT) the chain is Extracellular. The helical transmembrane segment at 88 to 108 (WILSSHFSLWFATALSIFYLL) threads the bilayer. At 109–124 (RIANCSWKIFLYLKWR) the chain is on the cytoplasmic side. Residues 125 to 145 (LKQVIVGMLLASLVFLPGILT) form a helical membrane-spanning segment. Topologically, residues 146-179 (QRTLEERPYRYGGNTSEDSMETDFARFTELILFN) are extracellular. N-linked (GlcNAc...) asparagine glycans are attached at residues Asn159 and Asn179. A helical membrane pass occupies residues 180–200 (LTIFSVIPFSLASISFLLLIF). The Cytoplasmic portion of the chain corresponds to 201–229 (SLWKHLRKMQLSSRGHGDPSTKAHTNALR). The helical transmembrane segment at 230–250 (IMVSFLLLYSIYFLSLLLSWI) threads the bilayer. Residues 251–260 (AQKHHSKLVD) are Extracellular-facing. The chain crosses the membrane as a helical span at residues 261–281 (IIGIITGLMYPSAHSFILILG). The Cytoplasmic segment spans residues 282–327 (NSKLMQTSLWILSHLRCRLKGENILNPSGNQVTSCYIFCIANKSVS).

This sequence belongs to the G-protein coupled receptor T2R family.

Its subcellular location is the membrane. In terms of biological role, putative taste receptor which may play a role in the perception of bitterness. This Rattus norvegicus (Rat) protein is Taste receptor type 2 member 102.